The primary structure comprises 373 residues: Muscleblind-like protein 2 (373 aa).

4 C3H1-type zinc fingers span residues 13–41 (WLTL…HPPK), 47–73 (NGRV…HPPT), 176–204 (TDKL…HPAD), and 212–238 (DNTV…HPPA).

It belongs to the muscleblind family. In terms of assembly, interacts with ITGA3.

It localises to the nucleus. The protein resides in the cytoplasm. Its function is as follows. Mediates pre-mRNA alternative splicing regulation. Acts either as activator or repressor of splicing on specific pre-mRNA targets. Inhibits cardiac troponin-T (TNNT2) pre-mRNA exon inclusion but induces insulin receptor (IR) pre-mRNA exon inclusion in muscle. Antagonizes the alternative splicing activity pattern of CELF proteins. RNA-binding protein that binds to 5'ACACCC-3' core sequence, termed zipcode, within the 3'UTR of ITGA3. Binds to CUG triplet repeat expansion in myotonic dystrophy muscle cells by sequestering the target RNAs. Together with RNA binding proteins RBPMS and RBFOX2, activates vascular smooth muscle cells alternative splicing events. Regulates NCOR2 alternative splicing. Seems to regulate expression and localization of ITGA3 by transporting it from the nucleus to cytoplasm at adhesion plaques. May play a role in myotonic dystrophy pathophysiology (DM). This Mus musculus (Mouse) protein is Muscleblind-like protein 2 (Mbnl2).